The following is a 372-amino-acid chain: GDP-mannose 4,6 dehydratase (372 aa).

The interval Met1 to Pro22 is disordered. Ala2 is modified (N-acetylalanine). Residues Gly30–Asp35, Arg55–Ser58, Asp86–Leu87, Leu108–Ser112, and Tyr123 contribute to the NADP(+) site. The active site involves Thr155. Residues Glu157 and Tyr179 each act as nucleophile in the active site. The NADP(+) site is built by Lys183, His209, and Arg214. Position 323 is a phosphotyrosine (Tyr323).

Belongs to the NAD(P)-dependent epimerase/dehydratase family. GDP-mannose 4,6-dehydratase subfamily. It depends on NADP(+) as a cofactor.

The enzyme catalyses GDP-alpha-D-mannose = GDP-4-dehydro-alpha-D-rhamnose + H2O. It functions in the pathway nucleotide-sugar biosynthesis; GDP-L-fucose biosynthesis via de novo pathway; GDP-L-fucose from GDP-alpha-D-mannose: step 1/2. Its activity is regulated as follows. Inhibited by GDP-fucose. Functionally, catalyzes the conversion of GDP-D-mannose to GDP-4-dehydro-6-deoxy-D-mannose. In Cricetulus griseus (Chinese hamster), this protein is GDP-mannose 4,6 dehydratase (GMDS).